A 560-amino-acid chain; its full sequence is Serine palmitoyltransferase 2 (560 aa).

Residues 65-85 (PMLVAVLTYVGYGVLTLFGYL) form a helical membrane-spanning segment. At lysine 377 the chain carries N6-(pyridoxal phosphate)lysine.

The protein belongs to the class-II pyridoxal-phosphate-dependent aminotransferase family. As to quaternary structure, component of the serine palmitoyltransferase (SPT) complex, which is composed of SPTLC1, SPTLC2 or SPTLC3 and SPTSSA or SPTSSB. The heterodimer consisting of SPTLC1 and SPTLC2/SPTLC3 forms the catalytic core of the enzyme, while SPTSSA or SPTSSB subunits determine substrate specificity. SPT also interacts with ORMDL proteins, especially ORMDL3, which negatively regulate SPT activity in the presence of ceramides. Forms dimers of heterodimers with SPTLC1. Pyridoxal 5'-phosphate is required as a cofactor. As to expression, expressed in a variety of tissues. Expressed in brains cortices (at protein level). Expressed in brown and white adipose tissues. Expressed in liver.

Its subcellular location is the endoplasmic reticulum membrane. It carries out the reaction L-serine + hexadecanoyl-CoA + H(+) = 3-oxosphinganine + CO2 + CoA. The enzyme catalyses octadecanoyl-CoA + L-serine + H(+) = 3-oxoeicosasphinganine + CO2 + CoA. Its pathway is lipid metabolism; sphingolipid metabolism. SPT complex catalytic activity is negatively regulated by ORMDL proteins, including ORMDL3, in the presence of ceramides. This mechanism allows to maintain ceramide levels at sufficient concentrations for the production of complex sphingolipids, but which prevents the accumulation of ceramides to levels that trigger apoptosis. In terms of biological role, component of the serine palmitoyltransferase multisubunit enzyme (SPT) that catalyzes the initial and rate-limiting step in sphingolipid biosynthesis by condensing L-serine and activated acyl-CoA (most commonly palmitoyl-CoA) to form long-chain bases. The SPT complex is composed of SPTLC1, SPTLC2 or SPTLC3 and SPTSSA or SPTSSB. Within this complex, the heterodimer consisting of SPTLC1 and SPTLC2/SPTLC3 forms the catalytic core. The composition of the serine palmitoyltransferase (SPT) complex determines the substrate preference. The SPTLC1-SPTLC2-SPTSSA complex shows a strong preference for C16-CoA substrate, while the SPTLC1-SPTLC3-SPTSSA isozyme uses both C14-CoA and C16-CoA as substrates, with a slight preference for C14-CoA. The SPTLC1-SPTLC2-SPTSSB complex shows a strong preference for C18-CoA substrate, while the SPTLC1-SPTLC3-SPTSSB isozyme displays an ability to use a broader range of acyl-CoAs, without apparent preference. Crucial for adipogenesis. The protein is Serine palmitoyltransferase 2 of Mus musculus (Mouse).